The chain runs to 338 residues: Ketol-acid reductoisomerase (NADP(+)) (338 aa).

A KARI N-terminal Rossmann domain is found at 1 to 181 (MKVFYDKDCD…GGGKAGIIET (181 aa)). NADP(+) is bound by residues 24–27 (YGSQ), Arg-47, and Ser-52. The active site involves His-107. Gly-133 is an NADP(+) binding site. Positions 182–327 (NFREETETDL…EKLRAMMPWI (146 aa)) constitute a KARI C-terminal knotted domain. Mg(2+)-binding residues include Asp-190, Glu-194, Glu-226, and Glu-230. Ser-251 contacts substrate.

The protein belongs to the ketol-acid reductoisomerase family. Mg(2+) is required as a cofactor.

It carries out the reaction (2R)-2,3-dihydroxy-3-methylbutanoate + NADP(+) = (2S)-2-acetolactate + NADPH + H(+). The enzyme catalyses (2R,3R)-2,3-dihydroxy-3-methylpentanoate + NADP(+) = (S)-2-ethyl-2-hydroxy-3-oxobutanoate + NADPH + H(+). Its pathway is amino-acid biosynthesis; L-isoleucine biosynthesis; L-isoleucine from 2-oxobutanoate: step 2/4. The protein operates within amino-acid biosynthesis; L-valine biosynthesis; L-valine from pyruvate: step 2/4. Its function is as follows. Involved in the biosynthesis of branched-chain amino acids (BCAA). Catalyzes an alkyl-migration followed by a ketol-acid reduction of (S)-2-acetolactate (S2AL) to yield (R)-2,3-dihydroxy-isovalerate. In the isomerase reaction, S2AL is rearranged via a Mg-dependent methyl migration to produce 3-hydroxy-3-methyl-2-ketobutyrate (HMKB). In the reductase reaction, this 2-ketoacid undergoes a metal-dependent reduction by NADPH to yield (R)-2,3-dihydroxy-isovalerate. In Polaromonas sp. (strain JS666 / ATCC BAA-500), this protein is Ketol-acid reductoisomerase (NADP(+)).